The chain runs to 290 residues: Ribosomal RNA small subunit methyltransferase A (290 aa).

The S-adenosyl-L-methionine site is built by asparagine 27, leucine 29, glycine 54, glutamate 75, aspartate 100, and asparagine 125.

The protein belongs to the class I-like SAM-binding methyltransferase superfamily. rRNA adenine N(6)-methyltransferase family. RsmA subfamily.

The protein resides in the cytoplasm. It catalyses the reaction adenosine(1518)/adenosine(1519) in 16S rRNA + 4 S-adenosyl-L-methionine = N(6)-dimethyladenosine(1518)/N(6)-dimethyladenosine(1519) in 16S rRNA + 4 S-adenosyl-L-homocysteine + 4 H(+). In terms of biological role, specifically dimethylates two adjacent adenosines (A1518 and A1519) in the loop of a conserved hairpin near the 3'-end of 16S rRNA in the 30S particle. May play a critical role in biogenesis of 30S subunits. This chain is Ribosomal RNA small subunit methyltransferase A, found in Streptococcus thermophilus (strain ATCC BAA-250 / LMG 18311).